Here is a 76-residue protein sequence, read N- to C-terminus: Omega/Kappa-hexatoxin-Hv1h (76 aa).

Residues 1 to 22 (MNTATGFIVLLVLATILGGIEA) form the signal peptide. A propeptide spanning residues 23–35 (GESHMRKDAMGRV) is cleaved from the precursor. 3 disulfides stabilise this stretch: Cys40-Cys55, Cys47-Cys60, and Cys54-Cys74.

This sequence belongs to the neurotoxin 08 (Shiva) family. 02 (omega/kappa toxin) subfamily. In terms of tissue distribution, expressed by the venom gland.

The protein localises to the secreted. In terms of biological role, toxin that may inhibit ion channels. This is Omega/Kappa-hexatoxin-Hv1h from Hadronyche versuta (Blue mountains funnel-web spider).